A 552-amino-acid polypeptide reads, in one-letter code: Probable ABC transporter ATP-binding/permease protein HI_0664 (552 aa).

Transmembrane regions (helical) follow at residues 22-42 (IMAF…FIMV), 52-72 (LNFD…VLAV), 139-159 (IAPI…FAQL), 162-182 (WFVL…PIIT), 253-273 (EVAV…LFSL), and 278-298 (FAAF…VIAL). Residues 23–307 (MAFTITMGTL…LSNLSSNLLQ (285 aa)) form the ABC transmembrane type-1 domain. Residues 340–552 (IDVENVNFAY…VIGIENGRMS (213 aa)) form the ABC transporter domain. ATP is bound at residue 372-379 (GRSGSGKS).

It belongs to the ABC transporter superfamily. Lipid exporter (TC 3.A.1.106) family.

The protein resides in the cell inner membrane. This is Probable ABC transporter ATP-binding/permease protein HI_0664 from Haemophilus influenzae (strain ATCC 51907 / DSM 11121 / KW20 / Rd).